A 295-amino-acid chain; its full sequence is 4-diphosphocytidyl-2-C-methyl-D-erythritol kinase (295 aa).

The active site involves K22. An ATP-binding site is contributed by 106 to 116 (PAGGGFGGGSS). The active site involves D148.

Belongs to the GHMP kinase family. IspE subfamily.

The catalysed reaction is 4-CDP-2-C-methyl-D-erythritol + ATP = 4-CDP-2-C-methyl-D-erythritol 2-phosphate + ADP + H(+). Its pathway is isoprenoid biosynthesis; isopentenyl diphosphate biosynthesis via DXP pathway; isopentenyl diphosphate from 1-deoxy-D-xylulose 5-phosphate: step 3/6. Functionally, catalyzes the phosphorylation of the position 2 hydroxy group of 4-diphosphocytidyl-2C-methyl-D-erythritol. The chain is 4-diphosphocytidyl-2-C-methyl-D-erythritol kinase from Xanthomonas campestris pv. campestris (strain 8004).